Reading from the N-terminus, the 466-residue chain is Argininosuccinate lyase (466 aa).

Residues serine 27, asparagine 114, and threonine 159 each contribute to the 2-(N(omega)-L-arginino)succinate site. The Proton acceptor role is filled by histidine 160. The Proton donor role is filled by serine 281. 2-(N(omega)-L-arginino)succinate-binding residues include asparagine 289, tyrosine 321, glutamine 326, and lysine 329.

Belongs to the lyase 1 family. Argininosuccinate lyase subfamily. As to quaternary structure, homotetramer. As to expression, eye lens.

It catalyses the reaction 2-(N(omega)-L-arginino)succinate = fumarate + L-arginine. It participates in amino-acid biosynthesis; L-arginine biosynthesis; L-arginine from L-ornithine and carbamoyl phosphate: step 3/3. In terms of biological role, delta crystallin, the principal crystallin in embryonic lens, is found only in birds and reptiles. This protein may also function as an enzymatically active argininosuccinate lyase. This is Argininosuccinate lyase (ASL2) from Gallus gallus (Chicken).